The chain runs to 399 residues: uncharacterized protein (399 aa).

This sequence belongs to the AdoMet synthetase 2 family.

This is an uncharacterized protein from Streptococcus pyogenes serotype M1.